The chain runs to 327 residues: Phenylalanine--tRNA ligase alpha subunit (327 aa).

Residue glutamate 252 participates in Mg(2+) binding.

The protein belongs to the class-II aminoacyl-tRNA synthetase family. Phe-tRNA synthetase alpha subunit type 1 subfamily. Tetramer of two alpha and two beta subunits. Requires Mg(2+) as cofactor.

It localises to the cytoplasm. It carries out the reaction tRNA(Phe) + L-phenylalanine + ATP = L-phenylalanyl-tRNA(Phe) + AMP + diphosphate + H(+). This Glaesserella parasuis serovar 5 (strain SH0165) (Haemophilus parasuis) protein is Phenylalanine--tRNA ligase alpha subunit.